The primary structure comprises 339 residues: Spore coat polysaccharide biosynthesis protein SpsG (339 aa).

Residues 241-261 traverse the membrane as a helical segment; it reads IVAGGISLYEAICIGVPCLVL.

It to M.jannaschii MJ1062.

Its subcellular location is the cell membrane. The protein operates within spore coat biogenesis; spore coat polysaccharide biosynthesis. This chain is Spore coat polysaccharide biosynthesis protein SpsG (spsG), found in Bacillus subtilis (strain 168).